The sequence spans 223 residues: Urease accessory protein UreF (223 aa).

Belongs to the UreF family. As to quaternary structure, ureD, UreF and UreG form a complex that acts as a GTP-hydrolysis-dependent molecular chaperone, activating the urease apoprotein by helping to assemble the nickel containing metallocenter of UreC. The UreE protein probably delivers the nickel.

It is found in the cytoplasm. Functionally, required for maturation of urease via the functional incorporation of the urease nickel metallocenter. This chain is Urease accessory protein UreF, found in Pseudomonas aeruginosa (strain LESB58).